We begin with the raw amino-acid sequence, 353 residues long: Rhodopsin (353 aa).

Over 1–36 the chain is Extracellular; sequence MNGTEGPYFYVPMVNTSGIVRSPYEYPQYYLVNPAA. Residues N2 and N15 are each glycosylated (N-linked (GlcNAc...) asparagine). Residues 37–61 traverse the membrane as a helical segment; it reads YAALGAYMFLLILVGFPINFLTLYV. The Cytoplasmic portion of the chain corresponds to 62–73; that stretch reads TIEHKKLRTPLN. The helical transmembrane segment at 74–96 threads the bilayer; sequence YILLNLAVADLFMVFGGFTTTMY. Residues 97-110 are Extracellular-facing; sequence TSMHGYFVLGRLGC. A disulfide bond links C110 and C187. A helical transmembrane segment spans residues 111–133; sequence NIEGFFATLGGEIALWSLVVLAI. Positions 134-136 match the 'Ionic lock' involved in activated form stabilization motif; that stretch reads ERW. Residues 134–152 are Cytoplasmic-facing; sequence ERWVVVCKPISNFRFGENH. The helical transmembrane segment at 153 to 173 threads the bilayer; it reads AIMGLAFTWLMALACAAPPLV. Residues 174–202 lie on the Extracellular side of the membrane; the sequence is GWSRYIPEGMQCSCGIDYYTRAEGFNNES. An N-linked (GlcNAc...) asparagine glycan is attached at N200. The chain crosses the membrane as a helical span at residues 203–224; the sequence is FVIYMFICHFSIPLLVVFFCYG. The Cytoplasmic segment spans residues 225–252; it reads RLLCAVKEAAAAQQESETTQRAEREVTR. Residues 253-274 traverse the membrane as a helical segment; the sequence is MVIMMVIAFLVCWLPYASVAWW. Residues 275 to 286 are Extracellular-facing; sequence IFTHQGSDFGPV. A helical membrane pass occupies residues 287-308; sequence FMTIPAFFAKSSSIYNPMIYIC. Residue K296 is modified to N6-(retinylidene)lysine. At 309 to 353 the chain is on the cytoplasmic side; it reads LNKQFRHCMITTLCCGKNPFEEEEGASTASKTEASSVSSSSVSPA. S-palmitoyl cysteine attachment occurs at residues C322 and C323. Positions 331–353 are disordered; sequence EEGASTASKTEASSVSSSSVSPA. Over residues 334–353 the composition is skewed to low complexity; that stretch reads ASTASKTEASSVSSSSVSPA.

The protein belongs to the G-protein coupled receptor 1 family. Opsin subfamily. Phosphorylated on some or all of the serine and threonine residues present in the C-terminal region. Post-translationally, contains one covalently linked retinal chromophore.

The protein resides in the membrane. Its subcellular location is the cell projection. It localises to the cilium. The protein localises to the photoreceptor outer segment. Its function is as follows. Photoreceptor required for image-forming vision at low light intensity. While most salt water fish species use retinal as chromophore, most freshwater fish use 3-dehydroretinal, or a mixture of retinal and 3-dehydroretinal. Light-induced isomerization of 11-cis to all-trans retinal triggers a conformational change that activates signaling via G-proteins. Subsequent receptor phosphorylation mediates displacement of the bound G-protein alpha subunit by arrestin and terminates signaling. This is Rhodopsin (rho) from Diplodus vulgaris (Common two-banded seabream).